The sequence spans 268 residues: Esterase GME11355 (268 aa).

Active-site charge relay system residues include serine 122, aspartate 212, and histidine 240.

This sequence belongs to the LovG family.

The protein operates within secondary metabolite biosynthesis. In terms of biological role, esterase; part of the gene cluster that mediates the biosynthesis of dibenzodioxocinones such as pestalotiollide B, a novel class of inhibitors against cholesterol ester transfer protein (CEPT). The biosynthesis initiates from condensation of acetate and malonate units catalyzed by the non-reducing PKS pks8/GME11356. Pks8/GME11356 lacks a thioesterase (TE) domain, which is important to the cyclizing of the third ring of atrochrysone carboxylic acid, and the esterase GME11355 might play the role of TE and catalyzes the cyclization reaction of the C ring. The lactamase-like protein GME11357 (or other beta-lactamases in Pestalotiopsis microspora) probably hydrolyzes the thioester bond between the ACP of pks8/GME11356 and the intermediate to release atrochrysone carboxylic acid, which is spontaneously dehydrates to form endocrocin anthrone. Endocrocin anthrone is further converted to emodin via the endocrocin intermediate. Emodin is then oxidized by several enzymes such as the Baeyer-Villiger oxidase GME11358, the oxidoreductase GME11367, the short chain dehydrogenase/reductase GME11373, as well as by other oxidoreductases from the cluster, to modify the A and C rings and open the B ring, and finally yield monodictyphenone. The prenyltransferase GME11375 may catalyze the addition reaction between the C5 side chains and the carbon bone of dibenzodioxocinones. The remaining biochemical reactions to the final product dibenzodioxocinones should be methylation catalyzed by methyltransferase GME11366 and reduction and lactonization reaction catalyzed by a series of oxidordeuctases. This chain is Esterase GME11355, found in Pestalotiopsis microspora.